Consider the following 938-residue polypeptide: Protocadherin gamma-C4 (938 aa).

Positions 1-29 (MLRKVRSWTEIWRWATLLFLFYHLGYVCG) are cleaved as a signal peptide. 6 consecutive Cadherin domains span residues 30 to 133 (QIRY…APRF), 134 to 242 (PRQQ…APAF), 243 to 350 (QQSS…APYI), 351 to 455 (TVTS…PPSF), 456 to 565 (FQRS…APAV), and 572 to 676 (PGSL…VPDL). The Extracellular segment spans residues 30 to 692 (QIRYPVPEES…REGESRLTLY (663 aa)). Asparagine 265, asparagine 276, and asparagine 444 each carry an N-linked (GlcNAc...) asparagine glycan. The chain crosses the membrane as a helical span at residues 693–713 (LAVSLVAICFVSFGSFVALLS). Residues 714 to 938 (KCLRGAACGV…KKKSGKKEKK (225 aa)) are Cytoplasmic-facing. Disordered stretches follow at residues 791–847 (PSAP…WPNN) and 908–938 (ATLTNAAGKRDGKAPAGGNGNKKKSGKKEKK). A compositionally biased stretch (polar residues) spans 822–847 (WRFSQAQRPGTSGSQNGDDTGTWPNN). The span at 928 to 938 (NKKKSGKKEKK) shows a compositional bias: basic residues.

Its subcellular location is the cell membrane. Its function is as follows. Potential calcium-dependent cell-adhesion protein. May be involved in the establishment and maintenance of specific neuronal connections in the brain. This Homo sapiens (Human) protein is Protocadherin gamma-C4 (PCDHGC4).